Here is a 490-residue protein sequence, read N- to C-terminus: UDP-N-acetylmuramoyl-L-alanyl-D-glutamate--2,6-diaminopimelate ligase (490 aa).

UDP-N-acetyl-alpha-D-muramoyl-L-alanyl-D-glutamate is bound at residue Ser-31. 109-115 (GTNGKTS) serves as a coordination point for ATP. Residues Asn-150, 151 to 152 (TT), Ser-178, and Arg-186 each bind UDP-N-acetyl-alpha-D-muramoyl-L-alanyl-D-glutamate. An N6-carboxylysine modification is found at Lys-218. Residues Arg-384, 408 to 411 (DNPR), Gly-458, and Glu-462 each bind meso-2,6-diaminopimelate. A Meso-diaminopimelate recognition motif motif is present at residues 408-411 (DNPR).

Belongs to the MurCDEF family. MurE subfamily. It depends on Mg(2+) as a cofactor. Carboxylation is probably crucial for Mg(2+) binding and, consequently, for the gamma-phosphate positioning of ATP.

The protein localises to the cytoplasm. It carries out the reaction UDP-N-acetyl-alpha-D-muramoyl-L-alanyl-D-glutamate + meso-2,6-diaminopimelate + ATP = UDP-N-acetyl-alpha-D-muramoyl-L-alanyl-gamma-D-glutamyl-meso-2,6-diaminopimelate + ADP + phosphate + H(+). It functions in the pathway cell wall biogenesis; peptidoglycan biosynthesis. Its function is as follows. Catalyzes the addition of meso-diaminopimelic acid to the nucleotide precursor UDP-N-acetylmuramoyl-L-alanyl-D-glutamate (UMAG) in the biosynthesis of bacterial cell-wall peptidoglycan. This chain is UDP-N-acetylmuramoyl-L-alanyl-D-glutamate--2,6-diaminopimelate ligase, found in Bacillus velezensis (strain DSM 23117 / BGSC 10A6 / LMG 26770 / FZB42) (Bacillus amyloliquefaciens subsp. plantarum).